Reading from the N-terminus, the 796-residue chain is Polyribonucleotide nucleotidyltransferase (796 aa).

Mg(2+) contacts are provided by Asp-490 and Asp-496. A KH domain is found at 557–616 (PRIESIFINKDKIRNVIGSGGKNIRDICEKTGAKIEIIQDGTVMIYAVNNEAVEYAKSMI). In terms of domain architecture, S1 motif spans 626–693 (GKVFEGTVVE…DREHIQLSMR (68 aa)). Composition is skewed to low complexity over residues 717–728 (DDSCGSTGGSSF), 747–759 (GGSS…NSNG), and 769–784 (SSNG…SNSR). The segment at 717–796 (DDSCGSTGGS…HDVPRKPRFF (80 aa)) is disordered. Residues 785–796 (NGHDVPRKPRFF) show a composition bias toward basic and acidic residues.

This sequence belongs to the polyribonucleotide nucleotidyltransferase family. Requires Mg(2+) as cofactor.

It is found in the cytoplasm. It carries out the reaction RNA(n+1) + phosphate = RNA(n) + a ribonucleoside 5'-diphosphate. In terms of biological role, involved in mRNA degradation. Catalyzes the phosphorolysis of single-stranded polyribonucleotides processively in the 3'- to 5'-direction. This chain is Polyribonucleotide nucleotidyltransferase, found in Ehrlichia chaffeensis (strain ATCC CRL-10679 / Arkansas).